The following is a 345-amino-acid chain: Mariner Mos1 transposase (345 aa).

Positions 1 to 112 (MSSFVPNKEQ…VSNRLREMGK (112 aa)) are DNA-binding. 2 consecutive DNA-binding regions (H-T-H motif) follow at residues 24-55 (TAAE…RFKS) and 89-110 (QKQL…LREM). The tract at residues 113–125 (IQKVGRWVPHELN) is linker. The segment at 126–345 (ERQMERRKNT…CVASDGKYLE (220 aa)) is catalytic. Mg(2+) is bound by residues Asp-156, Asp-249, and Asp-284.

Homodimer. The complex has a trans arrangement, with each transposon end recognized by the DNA binding region of one transposase monomer and by the active site of the other monomer. Requires Mg(2+) as cofactor. Mn(2+) serves as cofactor.

It localises to the nucleus. In terms of biological role, mediates transposition of transposon Mos1 by a 'cut and paste' mechanism. Transposases are sequence-specific nucleases and strand transferases that catalyze transposition through an ordered series of events: sequence-specific binding of transposase to the terminal inverted repeats (IR) present at each end of the transposon, pairing of the transposon IRs in a paired-end complex (PEC), cleavage of one or both DNA strands at each transposon end, capture of target DNA, and strand transfer to insert the transposon at a new site. The sequence is that of Mariner Mos1 transposase (mariner\T) from Drosophila mauritiana (Fruit fly).